Reading from the N-terminus, the 179-residue chain is NADH dehydrogenase [ubiquinone] 1 beta subcomplex subunit 9 (179 aa).

An N-acetylalanine modification is found at Ala-2. The residue at position 85 (Ser-85) is a Phosphoserine. The disordered stretch occupies residues 136 to 162 (EVKQLQEETPPGGPLTEALPPARKEGD).

Belongs to the complex I LYR family. Mammalian complex I is composed of 45 different subunits.

The protein resides in the mitochondrion inner membrane. Functionally, accessory subunit of the mitochondrial membrane respiratory chain NADH dehydrogenase (Complex I), that is believed to be not involved in catalysis. Complex I functions in the transfer of electrons from NADH to the respiratory chain. The immediate electron acceptor for the enzyme is believed to be ubiquinone. This Homo sapiens (Human) protein is NADH dehydrogenase [ubiquinone] 1 beta subcomplex subunit 9 (NDUFB9).